A 611-amino-acid chain; its full sequence is Dihydroxy-acid dehydratase (611 aa).

Aspartate 82 contacts Mg(2+). Cysteine 123 contributes to the [2Fe-2S] cluster binding site. 2 residues coordinate Mg(2+): aspartate 124 and lysine 125. Residue lysine 125 is modified to N6-carboxylysine. Cysteine 192 is a binding site for [2Fe-2S] cluster. Glutamate 489 provides a ligand contact to Mg(2+). Serine 515 (proton acceptor) is an active-site residue. Basic and acidic residues predominate over residues 565–574; that stretch reads ERRKAEEARG. The tract at residues 565-586 is disordered; the sequence is ERRKAEEARGKKAFTPPTRQRE.

It belongs to the IlvD/Edd family. As to quaternary structure, homodimer. The cofactor is [2Fe-2S] cluster. It depends on Mg(2+) as a cofactor.

It catalyses the reaction (2R)-2,3-dihydroxy-3-methylbutanoate = 3-methyl-2-oxobutanoate + H2O. It carries out the reaction (2R,3R)-2,3-dihydroxy-3-methylpentanoate = (S)-3-methyl-2-oxopentanoate + H2O. The protein operates within amino-acid biosynthesis; L-isoleucine biosynthesis; L-isoleucine from 2-oxobutanoate: step 3/4. It participates in amino-acid biosynthesis; L-valine biosynthesis; L-valine from pyruvate: step 3/4. Functionally, functions in the biosynthesis of branched-chain amino acids. Catalyzes the dehydration of (2R,3R)-2,3-dihydroxy-3-methylpentanoate (2,3-dihydroxy-3-methylvalerate) into 2-oxo-3-methylpentanoate (2-oxo-3-methylvalerate) and of (2R)-2,3-dihydroxy-3-methylbutanoate (2,3-dihydroxyisovalerate) into 2-oxo-3-methylbutanoate (2-oxoisovalerate), the penultimate precursor to L-isoleucine and L-valine, respectively. This chain is Dihydroxy-acid dehydratase, found in Parabacteroides distasonis (strain ATCC 8503 / DSM 20701 / CIP 104284 / JCM 5825 / NCTC 11152).